We begin with the raw amino-acid sequence, 283 residues long: Probable protein phosphatase 2C 17 (283 aa).

Residues 32–282 (KYGFSLIKGK…DDISCIVVRF (251 aa)) enclose the PPM-type phosphatase domain. Mn(2+) is bound by residues Asp-69, Gly-70, Asp-234, and Asp-273.

It belongs to the PP2C family. Mg(2+) serves as cofactor. The cofactor is Mn(2+).

The catalysed reaction is O-phospho-L-seryl-[protein] + H2O = L-seryl-[protein] + phosphate. It carries out the reaction O-phospho-L-threonyl-[protein] + H2O = L-threonyl-[protein] + phosphate. This is Probable protein phosphatase 2C 17 from Arabidopsis thaliana (Mouse-ear cress).